Consider the following 154-residue polypeptide: Transcriptional repressor NrdR (154 aa).

The segment at 3–34 (CPFCRHSDSRVIDSRETDEGQAIRRRRSCPEC) is a zinc-finger region. The region spanning 46–136 (VAVVKRSGVT…VYRSFSSADD (91 aa)) is the ATP-cone domain.

The protein belongs to the NrdR family. Zn(2+) is required as a cofactor.

Functionally, negatively regulates transcription of bacterial ribonucleotide reductase nrd genes and operons by binding to NrdR-boxes. The sequence is that of Transcriptional repressor NrdR from Mycobacterium leprae (strain Br4923).